A 123-amino-acid chain; its full sequence is Sirohydrochlorin cobaltochelatase (123 aa).

The active-site Proton acceptor is the histidine 9. A Co(2+)-binding site is contributed by histidine 9. Substrate contacts are provided by residues glutamate 43 and phenylalanine 68–histidine 73. Histidine 73 serves as a coordination point for Co(2+).

The protein belongs to the CbiX family. CbiXS subfamily. Homotetramer; dimer of dimers.

The catalysed reaction is Co-sirohydrochlorin + 2 H(+) = sirohydrochlorin + Co(2+). The protein operates within cofactor biosynthesis; adenosylcobalamin biosynthesis; cob(II)yrinate a,c-diamide from sirohydrochlorin (anaerobic route): step 1/10. In terms of biological role, catalyzes the insertion of Co(2+) into sirohydrochlorin as part of the anaerobic pathway to cobalamin biosynthesis. This is Sirohydrochlorin cobaltochelatase from Sulfolobus acidocaldarius (strain ATCC 33909 / DSM 639 / JCM 8929 / NBRC 15157 / NCIMB 11770).